A 129-amino-acid chain; its full sequence is Small ribosomal subunit protein uS11 (129 aa).

The protein belongs to the universal ribosomal protein uS11 family. Part of the 30S ribosomal subunit. Interacts with proteins S7 and S18. Binds to IF-3.

In terms of biological role, located on the platform of the 30S subunit, it bridges several disparate RNA helices of the 16S rRNA. Forms part of the Shine-Dalgarno cleft in the 70S ribosome. This chain is Small ribosomal subunit protein uS11, found in Bradyrhizobium sp. (strain ORS 278).